Consider the following 443-residue polypeptide: Putative F-box/FBD/LRR-repeat protein At3g49030 (443 aa).

The 49-residue stretch at 20 to 68 (EDRISELPEDLLLQILSDIPTENVIATSVLSKRWRSLWKMVPNLTFDFT) folds into the F-box domain. LRR repeat units follow at residues 74 to 100 (HQTF…QLNF), 152 to 179 (ILEI…RLYE), 180 to 205 (VHFK…SVHR), 218 to 252 (VPSL…NIVG), 272 to 297 (ISDV…SLES), and 320 to 345 (KERE…KLTG). Residues 357–408 (NWNPPKCVPECLLFHLEKFLWTGYEWQRGDEKEVATYILENARLLKKATFST) form the FBD domain.

The sequence is that of Putative F-box/FBD/LRR-repeat protein At3g49030 from Arabidopsis thaliana (Mouse-ear cress).